We begin with the raw amino-acid sequence, 336 residues long: MNSIAHSTLAAASPTIRHDWTREEAAAIYHAPFADLMFRAQTIHRQTFDPNQVQCNQLLNVKTGGCAEDCGYCSQSAHHDTALPASKLMEPAKVIEAAKAARDAGATRYCMGAAWRSPKERDMAPVIEMVKGVKALGMEACMTLGMLTDDQAKQLADAGLDYYNHNIDTSEEFYASVVKSRSFGDRLDTLEKVQDAGIKVCCGGILGLGEKPTDRVEMLRTLANLPQHPESVPINMLIPIEGTPIAKTATPVDPFEFVRTIALARIMMPKSDVRLAAGRTAMSDEMQALCFLAGANSIFIGDTLLTTPNPGDSKDRALFNRLGITPRDDLGVHAHS.

The region spanning 51–270 (NQVQCNQLLN…IALARIMMPK (220 aa)) is the Radical SAM core domain. 3 residues coordinate [4Fe-4S] cluster: Cys66, Cys70, and Cys73. [2Fe-2S] cluster is bound by residues Cys110, Cys141, Cys201, and Arg274.

This sequence belongs to the radical SAM superfamily. Biotin synthase family. In terms of assembly, homodimer. The cofactor is [4Fe-4S] cluster. [2Fe-2S] cluster serves as cofactor.

It catalyses the reaction (4R,5S)-dethiobiotin + (sulfur carrier)-SH + 2 reduced [2Fe-2S]-[ferredoxin] + 2 S-adenosyl-L-methionine = (sulfur carrier)-H + biotin + 2 5'-deoxyadenosine + 2 L-methionine + 2 oxidized [2Fe-2S]-[ferredoxin]. Its pathway is cofactor biosynthesis; biotin biosynthesis; biotin from 7,8-diaminononanoate: step 2/2. Catalyzes the conversion of dethiobiotin (DTB) to biotin by the insertion of a sulfur atom into dethiobiotin via a radical-based mechanism. This chain is Biotin synthase, found in Rhodopseudomonas palustris (strain ATCC BAA-98 / CGA009).